Consider the following 203-residue polypeptide: Leucyl/phenylalanyl-tRNA--protein transferase (203 aa).

The protein belongs to the L/F-transferase family.

It localises to the cytoplasm. The catalysed reaction is N-terminal L-lysyl-[protein] + L-leucyl-tRNA(Leu) = N-terminal L-leucyl-L-lysyl-[protein] + tRNA(Leu) + H(+). The enzyme catalyses N-terminal L-arginyl-[protein] + L-leucyl-tRNA(Leu) = N-terminal L-leucyl-L-arginyl-[protein] + tRNA(Leu) + H(+). It carries out the reaction L-phenylalanyl-tRNA(Phe) + an N-terminal L-alpha-aminoacyl-[protein] = an N-terminal L-phenylalanyl-L-alpha-aminoacyl-[protein] + tRNA(Phe). Functionally, functions in the N-end rule pathway of protein degradation where it conjugates Leu, Phe and, less efficiently, Met from aminoacyl-tRNAs to the N-termini of proteins containing an N-terminal arginine or lysine. In Chelativorans sp. (strain BNC1), this protein is Leucyl/phenylalanyl-tRNA--protein transferase.